Here is a 429-residue protein sequence, read N- to C-terminus: 3-phosphoshikimate 1-carboxyvinyltransferase (429 aa).

3 residues coordinate 3-phosphoshikimate: Lys-23, Ser-24, and Arg-28. Lys-23 lines the phosphoenolpyruvate pocket. Gly-97 and Arg-125 together coordinate phosphoenolpyruvate. 3-phosphoshikimate contacts are provided by Ser-170, Ser-171, Gln-172, Ser-198, Asp-314, Asn-338, and Lys-342. Gln-172 serves as a coordination point for phosphoenolpyruvate. The Proton acceptor role is filled by Asp-314. Arg-346, Arg-388, and Lys-413 together coordinate phosphoenolpyruvate.

It belongs to the EPSP synthase family. In terms of assembly, monomer.

It is found in the cytoplasm. It catalyses the reaction 3-phosphoshikimate + phosphoenolpyruvate = 5-O-(1-carboxyvinyl)-3-phosphoshikimate + phosphate. It functions in the pathway metabolic intermediate biosynthesis; chorismate biosynthesis; chorismate from D-erythrose 4-phosphate and phosphoenolpyruvate: step 6/7. Functionally, catalyzes the transfer of the enolpyruvyl moiety of phosphoenolpyruvate (PEP) to the 5-hydroxyl of shikimate-3-phosphate (S3P) to produce enolpyruvyl shikimate-3-phosphate and inorganic phosphate. This is 3-phosphoshikimate 1-carboxyvinyltransferase from Pectobacterium atrosepticum (strain SCRI 1043 / ATCC BAA-672) (Erwinia carotovora subsp. atroseptica).